Consider the following 161-residue polypeptide: Serine-protein kinase RsbW (161 aa).

Belongs to the anti-sigma-factor family.

It catalyses the reaction L-seryl-[protein] + ATP = O-phospho-L-seryl-[protein] + ADP + H(+). The enzyme catalyses L-threonyl-[protein] + ATP = O-phospho-L-threonyl-[protein] + ADP + H(+). Functionally, negative regulator of sigma-B activity. Phosphorylates and inactivates its specific antagonist protein, RsbV. Upon phosphorylation of RsbV, RsbW is released and binds to sigma-B, thereby blocking its ability to form an RNA polymerase holoenzyme (E-sigma-B). The sequence is that of Serine-protein kinase RsbW from Bacillus licheniformis (strain ATCC 14580 / DSM 13 / JCM 2505 / CCUG 7422 / NBRC 12200 / NCIMB 9375 / NCTC 10341 / NRRL NRS-1264 / Gibson 46).